We begin with the raw amino-acid sequence, 88 residues long: Large ribosomal subunit protein bL27 (88 aa).

It belongs to the bacterial ribosomal protein bL27 family.

This is Large ribosomal subunit protein bL27 from Mycolicibacterium vanbaalenii (strain DSM 7251 / JCM 13017 / BCRC 16820 / KCTC 9966 / NRRL B-24157 / PYR-1) (Mycobacterium vanbaalenii).